A 257-amino-acid polypeptide reads, in one-letter code: Ribonuclease HII (257 aa).

One can recognise an RNase H type-2 domain in the interval 72–257; it reads TYIAGIDEVG…FAPIKDMIQK (186 aa). The a divalent metal cation site is built by aspartate 78, glutamate 79, and aspartate 170.

Belongs to the RNase HII family. The cofactor is Mn(2+). It depends on Mg(2+) as a cofactor.

It is found in the cytoplasm. It catalyses the reaction Endonucleolytic cleavage to 5'-phosphomonoester.. Its function is as follows. Endonuclease that specifically degrades the RNA of RNA-DNA hybrids. The polypeptide is Ribonuclease HII (Bacillus cereus (strain AH820)).